The following is a 133-amino-acid chain: Core atranone cluster (CAC) protein 11 (133 aa).

It functions in the pathway mycotoxin biosynthesis. Its function is as follows. Part of the core atranone cluster (CAC) which products are predicted to catalyze most or all steps of mycotoxin atranone synthesis, starting from geranylgeranyl pyrophosphate (GGPP). The initial cyclization of GGPP to dolabellane is probably performed by the terpene cyclase ATR13. The Baeyer-Villiger oxidation near the end of the atranone synthesis, which converts atranones D and E to atranones F and G is predicted to be catalyzed by the monooxygenase ATR8. Of the CAC's other predicted gene products, the reducing PKS ATR6 might synthesize a polyketide chain. This polyketide is probably transferred onto the atranone backbone by the polyketide transferase ATR5. Other predicted CAC products include 4 oxygenases (ATR2, ATR3, ATR4, and ATR14), 3 short-chain reductases (ATR7, ATR9, and ATR10), and a methyltransferase (ATR12). These may all be involved in the various steps of atranone biosynthesis, although their specific roles must await experimental determination. This is Core atranone cluster (CAC) protein 11 from Stachybotrys chlorohalonatus (strain IBT 40285).